Here is a 255-residue protein sequence, read N- to C-terminus: Flagellar brake protein YcgR (255 aa).

Residues Gln-122–Glu-240 enclose the PilZ domain.

It belongs to the YcgR family. In terms of assembly, monomer. Interacts with the flagellar basal bodies.

The protein resides in the bacterial flagellum basal body. Functionally, acts as a flagellar brake, regulating swimming and swarming in a bis-(3'-5') cyclic diguanylic acid (c-di-GMP)-dependent manner. Binds 1 c-di-GMP dimer per subunit. Increasing levels of c-di-GMP lead to decreased motility. The chain is Flagellar brake protein YcgR from Pectobacterium carotovorum subsp. carotovorum (strain PC1).